The primary structure comprises 92 residues: MIVKPIGERVLLKHQKKEEVTKGGIYIPESARQEKKEGIVVAVGTFEDGKELPLKKDDHVIYGGYQADEIEIDDEKYIFVDFKDILATVVEE.

This sequence belongs to the GroES chaperonin family. Heptamer of 7 subunits arranged in a ring. Interacts with the chaperonin GroEL.

It localises to the cytoplasm. Functionally, together with the chaperonin GroEL, plays an essential role in assisting protein folding. The GroEL-GroES system forms a nano-cage that allows encapsulation of the non-native substrate proteins and provides a physical environment optimized to promote and accelerate protein folding. GroES binds to the apical surface of the GroEL ring, thereby capping the opening of the GroEL channel. The polypeptide is Co-chaperonin GroES (Methanosarcina mazei (strain ATCC BAA-159 / DSM 3647 / Goe1 / Go1 / JCM 11833 / OCM 88) (Methanosarcina frisia)).